The sequence spans 338 residues: Lipoate-protein ligase A (338 aa).

In terms of domain architecture, BPL/LPL catalytic spans 29-216 (PATQRVLFLW…AFFAHYGERV (188 aa)). ATP is bound by residues R71, 76-79 (GAVF), and K134. K134 is a (R)-lipoate binding site.

It belongs to the LplA family. Monomer.

It localises to the cytoplasm. The catalysed reaction is L-lysyl-[lipoyl-carrier protein] + (R)-lipoate + ATP = N(6)-[(R)-lipoyl]-L-lysyl-[lipoyl-carrier protein] + AMP + diphosphate + H(+). It functions in the pathway protein modification; protein lipoylation via exogenous pathway; protein N(6)-(lipoyl)lysine from lipoate: step 1/2. Its pathway is protein modification; protein lipoylation via exogenous pathway; protein N(6)-(lipoyl)lysine from lipoate: step 2/2. Its function is as follows. Catalyzes both the ATP-dependent activation of exogenously supplied lipoate to lipoyl-AMP and the transfer of the activated lipoyl onto the lipoyl domains of lipoate-dependent enzymes. The protein is Lipoate-protein ligase A of Escherichia coli O6:K15:H31 (strain 536 / UPEC).